The primary structure comprises 91 residues: Small ribosomal subunit protein bS20 (91 aa).

The segment covering 1-18 (MPLHKSAEKRLRQSEKRN) has biased composition (basic and acidic residues). Residues 1–24 (MPLHKSAEKRLRQSEKRNVRNRAR) form a disordered region.

This sequence belongs to the bacterial ribosomal protein bS20 family.

Functionally, binds directly to 16S ribosomal RNA. The protein is Small ribosomal subunit protein bS20 of Chlorobium phaeobacteroides (strain DSM 266 / SMG 266 / 2430).